A 378-amino-acid polypeptide reads, in one-letter code: S-adenosylmethionine:tRNA ribosyltransferase-isomerase (378 aa).

Belongs to the QueA family. As to quaternary structure, monomer.

It localises to the cytoplasm. It catalyses the reaction 7-aminomethyl-7-carbaguanosine(34) in tRNA + S-adenosyl-L-methionine = epoxyqueuosine(34) in tRNA + adenine + L-methionine + 2 H(+). The protein operates within tRNA modification; tRNA-queuosine biosynthesis. Its function is as follows. Transfers and isomerizes the ribose moiety from AdoMet to the 7-aminomethyl group of 7-deazaguanine (preQ1-tRNA) to give epoxyqueuosine (oQ-tRNA). This is S-adenosylmethionine:tRNA ribosyltransferase-isomerase from Prochlorococcus marinus (strain MIT 9312).